Reading from the N-terminus, the 201-residue chain is 3-isopropylmalate dehydratase small subunit (201 aa).

This sequence belongs to the LeuD family. LeuD type 1 subfamily. In terms of assembly, heterodimer of LeuC and LeuD.

It carries out the reaction (2R,3S)-3-isopropylmalate = (2S)-2-isopropylmalate. It functions in the pathway amino-acid biosynthesis; L-leucine biosynthesis; L-leucine from 3-methyl-2-oxobutanoate: step 2/4. Its function is as follows. Catalyzes the isomerization between 2-isopropylmalate and 3-isopropylmalate, via the formation of 2-isopropylmaleate. The sequence is that of 3-isopropylmalate dehydratase small subunit from Cytophaga hutchinsonii (strain ATCC 33406 / DSM 1761 / CIP 103989 / NBRC 15051 / NCIMB 9469 / D465).